Here is a 458-residue protein sequence, read N- to C-terminus: 5-hydroxytryptamine receptor 2C (458 aa).

An N-terminal signal peptide occupies residues 1-32 (MVNLRNAVHSFLVHLIGLLVWQSDISVSPVAA). Residues 33–55 (IVTDIFNTSDGGRFKFPDGVQNW) are Extracellular-facing. The N-linked (GlcNAc...) asparagine glycan is linked to asparagine 39. A helical transmembrane segment spans residues 56–80 (PALSIVIIIIMTIGGNILVIMAVSM). The Cytoplasmic segment spans residues 81-86 (EKKLHN). The helical transmembrane segment at 87 to 111 (ATNYFLMSLAIADMLVGLLVMPLSL) threads the bilayer. The Extracellular segment spans residues 112–128 (LAILYDYVWPLPRYLCP). Cysteines 127 and 207 form a disulfide. A helical transmembrane segment spans residues 129 to 151 (VWISLDVLFSTASIMHLCAISLD). Threonine 139 contributes to the ergotamine binding site. The DRY motif; important for ligand-induced conformation changes signature appears at 151–153 (DRY). The Cytoplasmic segment spans residues 152 to 167 (RYVAIRNPIEHSRFNS). The chain crosses the membrane as a helical span at residues 168–189 (RTKAIMKIAIVWAISIGVSVPI). Topologically, residues 190-213 (PVIGLRDEEKVFVNNTTCVLNDPN) are extracellular. Residue asparagine 204 is glycosylated (N-linked (GlcNAc...) asparagine). Leucine 209 provides a ligand contact to ergotamine. A helical transmembrane segment spans residues 214–236 (FVLIGSFVAFFIPLTIMVITYCL). At 237 to 311 (TIYVLRRQAL…AINNERKASK (75 aa)) the chain is on the cytoplasmic side. The disordered stretch occupies residues 274–301 (EENSANPNQDQNARRRKKKERRPRGTMQ). A compositionally biased stretch (basic residues) spans 287 to 297 (RRRKKKERRPR). The helical transmembrane segment at 312-336 (VLGIVFFVFLIMWCPFFITNILSVL) threads the bilayer. Cysteine 337 and cysteine 341 are joined by a disulfide. Over 337–347 (CEKSCNQKLME) the chain is Extracellular. Residues 348–370 (KLLNVFVWIGYVCSGINPLVYTL) traverse the membrane as a helical segment. Residues 364–368 (NPLVY) carry the NPxxY motif; important for ligand-induced conformation changes and signaling motif. Topologically, residues 371 to 458 (FNKIYRRAFS…SVVSERISSV (88 aa)) are cytoplasmic. The PDZ-binding motif lies at 456–458 (SSV).

It belongs to the G-protein coupled receptor 1 family. Interacts with MPDZ. Interacts with ARRB2. Interacts with MPP3; this interaction stabilizes the receptor at the plasma membrane and prevents the desensitization of the HTR2C receptor-mediated calcium response. In terms of processing, N-glycosylated. As to expression, detected in brain.

The protein localises to the cell membrane. Inhibited by inverse agonist ritanserin. Functionally, G-protein coupled receptor for 5-hydroxytryptamine (serotonin). Also functions as a receptor for various drugs and psychoactive substances, including ergot alkaloid derivatives, 1-2,5,-dimethoxy-4-iodophenyl-2-aminopropane (DOI) and lysergic acid diethylamide (LSD). Ligand binding causes a conformation change that triggers signaling via guanine nucleotide-binding proteins (G proteins) and modulates the activity of downstream effectors. HTR2C is coupled to G(q)/G(11) G alpha proteins and activates phospholipase C-beta, releasing diacylglycerol (DAG) and inositol 1,4,5-trisphosphate (IP3) second messengers that modulate the activity of phosphatidylinositol 3-kinase and promote the release of Ca(2+) ions from intracellular stores, respectively. Beta-arrestin family members inhibit signaling via G proteins and mediate activation of alternative signaling pathways. Regulates neuronal activity via the activation of short transient receptor potential calcium channels in the brain, and thereby modulates the activation of pro-opiomelanocortin neurons and the release of CRH that then regulates the release of corticosterone. Plays a role in the regulation of appetite and eating behavior, responses to anxiogenic stimuli and stress. Plays a role in insulin sensitivity and glucose homeostasis. This is 5-hydroxytryptamine receptor 2C from Homo sapiens (Human).